A 382-amino-acid polypeptide reads, in one-letter code: Intermediate transcription factor 3 large subunit (382 aa).

Belongs to the poxviruses A23 family. In terms of assembly, heterodimer of a 45 kDa and a 32 kDa subunit.

Its function is as follows. Acts with RNA polymerase to initiate transcription from intermediate gene promoters. The protein is Intermediate transcription factor 3 large subunit (VITF3L) of Ectromelia virus (strain Moscow) (ECTV).